The sequence spans 370 residues: Mitogen-activated protein kinase 3 (370 aa).

One can recognise a Protein kinase domain in the interval 32–319 (YVPIKPIGRG…VTEALEHPYM (288 aa)). ATP-binding positions include 38–46 (IGRGAYGIV) and Lys61. The active-site Proton acceptor is the Asp158. Thr191 carries the post-translational modification Phosphothreonine. A TXY motif is present at residues 191 to 193 (TEY). Tyr193 carries the post-translational modification Phosphotyrosine.

The protein belongs to the protein kinase superfamily. CMGC Ser/Thr protein kinase family. MAP kinase subfamily. In terms of processing, dually phosphorylated on Thr-191 and Tyr-193, which activates the enzyme.

The catalysed reaction is L-seryl-[protein] + ATP = O-phospho-L-seryl-[protein] + ADP + H(+). It carries out the reaction L-threonyl-[protein] + ATP = O-phospho-L-threonyl-[protein] + ADP + H(+). With respect to regulation, activated by threonine and tyrosine phosphorylation. This Oryza sativa subsp. japonica (Rice) protein is Mitogen-activated protein kinase 3 (MPK3).